Here is a 39-residue protein sequence, read N- to C-terminus: Bomanin Short 3 (39 aa).

The signal sequence occupies residues 1 to 18 (MKFLSLAFVLGLLALANA). Positions 19–23 (TPLNP) are excised as a propeptide. A disulfide bridge connects residues Cys-32 and Cys-35.

This sequence belongs to the bomanin family. In terms of tissue distribution, hemolymph (at protein level).

The protein resides in the secreted. Its function is as follows. Secreted immune-induced peptide induced by Toll signaling. Has a role in resistance bacterial and fungal infections. The strength of antimicrobial activity appears to correlate with the overall level of expression. Has no activity against the fungus C.glabrata in vitro. The polypeptide is Bomanin Short 3 (Drosophila melanogaster (Fruit fly)).